The chain runs to 379 residues: Oxidized polyvinyl alcohol hydrolase (379 aa).

Positions 1–23 (MNQSLGVLRLTRGVIALALASVA) are cleaved as a signal peptide. Residues S203 and S309 each act as charge relay system in the active site.

This sequence belongs to the peptidase S9A family. In terms of assembly, monomer.

The enzyme catalyses nonane-4,6-dione + H2O = pentan-2-one + butanoate + H(+). Catalyzes the hydrolysis of 4,6-nonanedione, a beta-diketone compound. Also mediates hydrolysis of oxidized polyvinyl alcohol (PVA) in the second step in the degradation of polyvinyl alcohol. Not active toward the monoketone structure. The sequence is that of Oxidized polyvinyl alcohol hydrolase (pvaB) from Pseudomonas sp.